Here is a 268-residue protein sequence, read N- to C-terminus: 3-methyl-2-oxobutanoate hydroxymethyltransferase (268 aa).

2 residues coordinate Mg(2+): Asp46 and Asp85. Residues 46-47 (DS), Asp85, and Lys114 each bind 3-methyl-2-oxobutanoate. Position 116 (Glu116) interacts with Mg(2+). The active-site Proton acceptor is the Glu183.

This sequence belongs to the PanB family. In terms of assembly, homodecamer; pentamer of dimers. It depends on Mg(2+) as a cofactor.

The protein localises to the cytoplasm. It catalyses the reaction 3-methyl-2-oxobutanoate + (6R)-5,10-methylene-5,6,7,8-tetrahydrofolate + H2O = 2-dehydropantoate + (6S)-5,6,7,8-tetrahydrofolate. It functions in the pathway cofactor biosynthesis; coenzyme A biosynthesis. In terms of biological role, catalyzes the reversible reaction in which hydroxymethyl group from 5,10-methylenetetrahydrofolate is transferred onto alpha-ketoisovalerate to form ketopantoate. The polypeptide is 3-methyl-2-oxobutanoate hydroxymethyltransferase (Sulfolobus acidocaldarius (strain ATCC 33909 / DSM 639 / JCM 8929 / NBRC 15157 / NCIMB 11770)).